Here is a 220-residue protein sequence, read N- to C-terminus: Deoxyribose-phosphate aldolase (220 aa).

Catalysis depends on Asp-92, which acts as the Proton donor/acceptor. Lys-155 acts as the Schiff-base intermediate with acetaldehyde in catalysis. Lys-184 (proton donor/acceptor) is an active-site residue.

It belongs to the DeoC/FbaB aldolase family. DeoC type 1 subfamily.

The protein localises to the cytoplasm. The catalysed reaction is 2-deoxy-D-ribose 5-phosphate = D-glyceraldehyde 3-phosphate + acetaldehyde. It functions in the pathway carbohydrate degradation; 2-deoxy-D-ribose 1-phosphate degradation; D-glyceraldehyde 3-phosphate and acetaldehyde from 2-deoxy-alpha-D-ribose 1-phosphate: step 2/2. Catalyzes a reversible aldol reaction between acetaldehyde and D-glyceraldehyde 3-phosphate to generate 2-deoxy-D-ribose 5-phosphate. The chain is Deoxyribose-phosphate aldolase from Symbiobacterium thermophilum (strain DSM 24528 / JCM 14929 / IAM 14863 / T).